Reading from the N-terminus, the 339-residue chain is Dual specificity protein phosphatase 12 (339 aa).

Residue methionine 1 is modified to N-acetylmethionine. A compositionally biased stretch (polar residues) spans 1–22 (MLEVQSSNHGCERQAPTTSPAS). Residues 1–25 (MLEVQSSNHGCERQAPTTSPASSAG) form a disordered region. A Tyrosine-protein phosphatase domain is found at 26–170 (HAVEVRPGLY…LKLYEAMGHE (145 aa)). Catalysis depends on cysteine 114, which acts as the Phosphocysteine intermediate. 115 to 120 (HAGVSR) provides a ligand contact to substrate. Residue serine 334 is modified to Phosphoserine.

Belongs to the protein-tyrosine phosphatase family. Non-receptor class dual specificity subfamily. In terms of assembly, monomer. Requires Zn(2+) as cofactor.

The protein resides in the nucleus. It is found in the cytoplasm. The protein localises to the cytosol. The enzyme catalyses O-phospho-L-tyrosyl-[protein] + H2O = L-tyrosyl-[protein] + phosphate. It catalyses the reaction O-phospho-L-seryl-[protein] + H2O = L-seryl-[protein] + phosphate. The catalysed reaction is O-phospho-L-threonyl-[protein] + H2O = L-threonyl-[protein] + phosphate. Dual specificity phosphatase; can dephosphorylate both phosphotyrosine and phosphoserine or phosphothreonine residues. Can dephosphorylate glucokinase (in vitro). Has phosphatase activity with the synthetic substrate 6,8-difluoro-4-methylumbelliferyl phosphate and other in vitro substrates. This is Dual specificity protein phosphatase 12 (Dusp12) from Rattus norvegicus (Rat).